Consider the following 125-residue polypeptide: Ribosome-binding factor A (125 aa).

This sequence belongs to the RbfA family. In terms of assembly, monomer. Binds 30S ribosomal subunits, but not 50S ribosomal subunits or 70S ribosomes.

The protein resides in the cytoplasm. Its function is as follows. One of several proteins that assist in the late maturation steps of the functional core of the 30S ribosomal subunit. Associates with free 30S ribosomal subunits (but not with 30S subunits that are part of 70S ribosomes or polysomes). Required for efficient processing of 16S rRNA. May interact with the 5'-terminal helix region of 16S rRNA. The polypeptide is Ribosome-binding factor A (Xylella fastidiosa (strain 9a5c)).